The sequence spans 25 residues: Unknown protein 4 (25 aa).

The segment covering 1–10 (IEHNAEEIRK) has biased composition (basic and acidic residues). The tract at residues 1 to 25 (IEHNAEEIRKTAIRTAVQNTAQQTK) is disordered. Polar residues predominate over residues 16–25 (AVQNTAQQTK).

This is Unknown protein 4 from Lonomia obliqua (Moth).